The following is a 587-amino-acid chain: MERLMRLTILLFLGAVLAGCASVPSTSAPQAIGTVERPVPSNLPKPSPGMDPDVLLREFLKATADPANRHLAARQFLTESASNAWDDAGSALLIDHVVFVETRSAEKVSVTMRADILGSLSDVGVFETAEGQLPDPGPIELVKTSGGWRIDRLPNGVFLDWQQFQETYKRNTLYFADPTGKTVVPDPRYVAVSDRDQLATELVSKLLAGPRPEMARTVRNLLAPPLRLRGPVTRADGGKSGIGRGYGGARVDMEKLSTTDPHSRQLLAAQIIWTLARADIRGPYVINADGAPLEDRFAEGWTTSDVAATDPGVADGAAAGLHALVNGSLVAMDAQRVTPVPGAFGRMPEQTAAAVSRSGRQVASVVTLGRGAPDEAASLWVGDLGGEAVQSADGHSLLRPSWSLDDAVWVVVDTNVVLRAIQDPASGQPARIPVDSTAVASRFPGAINDLQLSRDGTRAAMVIGGQVILAGVEQTQAGQFALTYPRRLGFGLGSSVVSLSWRTGDDIVVTRTDAAHPVSYVNLDGVNSDAPSRGLQTPLTAIAANPSTVYVAGPQGVLMYSASVESRPGWADVPGLMVPGAAPVLPG.

Positions Met1–Gly19 are cleaved as a signal peptide. A lipid anchor (N-palmitoyl cysteine) is attached at Cys20. Cys20 carries the S-diacylglycerol cysteine lipid modification.

Belongs to the LpqB lipoprotein family.

The protein localises to the cell membrane. The chain is Lipoprotein LpqB from Mycobacterium bovis (strain ATCC BAA-935 / AF2122/97).